The primary structure comprises 729 residues: MLYQSETLQLHWLENGIAELVFDAPGSVNKLDTKTVANLGEALNVLEKQSELKGLLLRSAKTALIVGADITEFLSLFNAPPEKLHQWLVFANTIFNRLEDLPVPTISAINGYALGGGCECILATDFRIASPEARIGLPETKLGIMPGFGGSVRLPRLLGADSALEIIATGKDVTANDALKIGLVDAVVDPEKLVGSALTMLKQAIDGKLDWQAARRPKLEPLKLNPTEAAMCFTIAKGRVMQVAGKHYPAPLTAVKTIEAAAKFGRTEALNLETNSFVPLAGSNEARALVGIFLNDQYVKAQAKKLSKGVAAPKLAAVLGAGIMGGGIAYQSALKSVPVIMKDINENSLDLGMNEAAKLLNKQLERGKVDGLKMASILATIRPTLDYAGIERAQVIVEAVVENPKVKAAVLAEVEALIGEDTVLASNTSTIPIDQLAKSLKRPENFCGMHFFNPVHQMPLVEIIRGAKTSDKTLAAVVAYATQMGKTPIVVNDCPGFFVNRVLFPYLAGFGMLVRDGGDFHQIDKVMEKQFGWPMGPAYLLDVVGIDTAHHAQAVMAAGFPERMNKDYRDAVDVMFDNQRFGQKNGQGFYRYTQDAKGKPRKENDEQVDKLLAEISQPLQEFSDEDIIARTMIPMINEVVRCLEEGIIASAAEGDMALVYGLGFPPFHGGVFRYLDTLGSANYVEMAQRYAHLGALYHVPAGLRAKAEHNESYYPVAAALLDVSTNQPA.

The tract at residues 1–189 is enoyl-CoA hydratase/isomerase; sequence MLYQSETLQL…KIGLVDAVVD (189 aa). Position 296 (aspartate 296) interacts with substrate. Residues 311-729 form a 3-hydroxyacyl-CoA dehydrogenase region; it reads AAPKLAAVLG…LLDVSTNQPA (419 aa). NAD(+)-binding positions include methionine 324, aspartate 343, 400-402, lysine 407, and serine 429; that span reads VVE. The For 3-hydroxyacyl-CoA dehydrogenase activity role is filled by histidine 450. Asparagine 453 is an NAD(+) binding site. Substrate-binding residues include asparagine 500 and tyrosine 660.

This sequence in the N-terminal section; belongs to the enoyl-CoA hydratase/isomerase family. In the C-terminal section; belongs to the 3-hydroxyacyl-CoA dehydrogenase family. As to quaternary structure, heterotetramer of two alpha chains (FadB) and two beta chains (FadA).

The enzyme catalyses a (3S)-3-hydroxyacyl-CoA + NAD(+) = a 3-oxoacyl-CoA + NADH + H(+). The catalysed reaction is a (3S)-3-hydroxyacyl-CoA = a (2E)-enoyl-CoA + H2O. It carries out the reaction a 4-saturated-(3S)-3-hydroxyacyl-CoA = a (3E)-enoyl-CoA + H2O. It catalyses the reaction (3S)-3-hydroxybutanoyl-CoA = (3R)-3-hydroxybutanoyl-CoA. The enzyme catalyses a (3Z)-enoyl-CoA = a 4-saturated (2E)-enoyl-CoA. The catalysed reaction is a (3E)-enoyl-CoA = a 4-saturated (2E)-enoyl-CoA. It participates in lipid metabolism; fatty acid beta-oxidation. Involved in the aerobic and anaerobic degradation of long-chain fatty acids via beta-oxidation cycle. Catalyzes the formation of 3-oxoacyl-CoA from enoyl-CoA via L-3-hydroxyacyl-CoA. It can also use D-3-hydroxyacyl-CoA and cis-3-enoyl-CoA as substrate. This Yersinia pseudotuberculosis serotype IB (strain PB1/+) protein is Fatty acid oxidation complex subunit alpha.